The chain runs to 588 residues: Proteasome-associated ATPase (588 aa).

Over residues 1-10 (MAAHDDDMNR) the composition is skewed to basic and acidic residues. The disordered stretch occupies residues 1–23 (MAAHDDDMNRGIRPGRGSDDPSG). Positions 47 to 94 (RILEERIVELQTNLAGVSAQNERLANTLREARDQIVALKEEVDRLAQP) form a coiled coil. 276-281 (GCGKTL) lines the ATP pocket. The docks into pockets in the proteasome alpha-ring stretch occupies residues 587–588 (YL).

It belongs to the AAA ATPase family. As to quaternary structure, homohexamer. Assembles into a hexameric ring structure that caps the 20S proteasome core. Strongly interacts with the prokaryotic ubiquitin-like protein Pup through a hydrophobic interface; the interacting region of ARC lies in its N-terminal coiled-coil domain. There is one Pup binding site per ARC hexamer ring. Upon ATP-binding, the C-terminus of ARC interacts with the alpha-rings of the proteasome core, possibly by binding to the intersubunit pockets.

It participates in protein degradation; proteasomal Pup-dependent pathway. Functionally, ATPase which is responsible for recognizing, binding, unfolding and translocation of pupylated proteins into the bacterial 20S proteasome core particle. May be essential for opening the gate of the 20S proteasome via an interaction with its C-terminus, thereby allowing substrate entry and access to the site of proteolysis. Thus, the C-termini of the proteasomal ATPase may function like a 'key in a lock' to induce gate opening and therefore regulate proteolysis. The protein is Proteasome-associated ATPase of Streptomyces scabiei (strain 87.22).